Here is a 375-residue protein sequence, read N- to C-terminus: Carbamoyl phosphate synthase small chain (375 aa).

The segment at Met-1–Thr-184 is CPSase. L-glutamine-binding residues include Ser-44, Gly-240, and Gly-242. In terms of domain architecture, Glutamine amidotransferase type-1 spans Ile-188–Phe-375. The active-site Nucleophile is Cys-268. L-glutamine is bound by residues Leu-269, Gln-272, Asn-310, and Tyr-313. Active-site residues include His-351 and Glu-353.

The protein belongs to the CarA family. As to quaternary structure, composed of two chains; the small (or glutamine) chain promotes the hydrolysis of glutamine to ammonia, which is used by the large (or ammonia) chain to synthesize carbamoyl phosphate. Tetramer of heterodimers (alpha,beta)4.

The enzyme catalyses hydrogencarbonate + L-glutamine + 2 ATP + H2O = carbamoyl phosphate + L-glutamate + 2 ADP + phosphate + 2 H(+). It carries out the reaction L-glutamine + H2O = L-glutamate + NH4(+). Its pathway is amino-acid biosynthesis; L-arginine biosynthesis; carbamoyl phosphate from bicarbonate: step 1/1. It participates in pyrimidine metabolism; UMP biosynthesis via de novo pathway; (S)-dihydroorotate from bicarbonate: step 1/3. Functionally, small subunit of the glutamine-dependent carbamoyl phosphate synthetase (CPSase). CPSase catalyzes the formation of carbamoyl phosphate from the ammonia moiety of glutamine, carbonate, and phosphate donated by ATP, constituting the first step of 2 biosynthetic pathways, one leading to arginine and/or urea and the other to pyrimidine nucleotides. The small subunit (glutamine amidotransferase) binds and cleaves glutamine to supply the large subunit with the substrate ammonia. The protein is Carbamoyl phosphate synthase small chain of Helicobacter pylori (strain ATCC 700392 / 26695) (Campylobacter pylori).